A 268-amino-acid polypeptide reads, in one-letter code: Hydroxyethylthiazole kinase (268 aa).

Met49 contacts substrate. Residues Lys124 and Thr168 each coordinate ATP. A substrate-binding site is contributed by Ala195.

This sequence belongs to the Thz kinase family. Mg(2+) serves as cofactor.

It catalyses the reaction 5-(2-hydroxyethyl)-4-methylthiazole + ATP = 4-methyl-5-(2-phosphooxyethyl)-thiazole + ADP + H(+). It participates in cofactor biosynthesis; thiamine diphosphate biosynthesis; 4-methyl-5-(2-phosphoethyl)-thiazole from 5-(2-hydroxyethyl)-4-methylthiazole: step 1/1. Catalyzes the phosphorylation of the hydroxyl group of 4-methyl-5-beta-hydroxyethylthiazole (THZ). The polypeptide is Hydroxyethylthiazole kinase (Archaeoglobus fulgidus (strain ATCC 49558 / DSM 4304 / JCM 9628 / NBRC 100126 / VC-16)).